A 51-amino-acid polypeptide reads, in one-letter code: Large ribosomal subunit protein bL33 (51 aa).

The segment at 1–23 (MREKIKLESSAGTGHFYTTTKNK) is disordered. Residues 10-20 (SAGTGHFYTTT) show a composition bias toward polar residues.

Belongs to the bacterial ribosomal protein bL33 family.

The protein is Large ribosomal subunit protein bL33 of Nitrosomonas eutropha (strain DSM 101675 / C91 / Nm57).